We begin with the raw amino-acid sequence, 303 residues long: Methionyl-tRNA formyltransferase (303 aa).

A (6S)-5,6,7,8-tetrahydrofolate-binding site is contributed by serine 108 to proline 111.

This sequence belongs to the Fmt family.

The enzyme catalyses L-methionyl-tRNA(fMet) + (6R)-10-formyltetrahydrofolate = N-formyl-L-methionyl-tRNA(fMet) + (6S)-5,6,7,8-tetrahydrofolate + H(+). Functionally, attaches a formyl group to the free amino group of methionyl-tRNA(fMet). The formyl group appears to play a dual role in the initiator identity of N-formylmethionyl-tRNA by promoting its recognition by IF2 and preventing the misappropriation of this tRNA by the elongation apparatus. The chain is Methionyl-tRNA formyltransferase from Rickettsia africae (strain ESF-5).